Consider the following 317-residue polypeptide: MAARTLASALVLTLWVWALAPAGAVDAMGPHAAVRLAELLTPEECGHFRSLLEAPEPDVEAELSRLSEDRLARPEPLNTTSGSPSRRRRREAAEDPAGRVAGPGEVSDGCREALAAWLAPQAASLSWDRLARALRRSGRPDVARELGKNLHQQATLQLRKFGQRFLPRPGAAARVPFAPAPRPRRAAVPAPDWDALQLIVERLPQPLYERSPMGWAGPLALGLLTGFVGALGTGALVVLLTLWITGGDGDRASPGSPGPLATVQGWWETKLLLPKERRAPPGAWAADGPDSPSPHSALALSCKMGAQSWGSGALDGL.

A signal peptide spans 1–27 (MAARTLASALVLTLWVWALAPAGAVDA). Over 28–218 (MGPHAAVRLA…ERSPMGWAGP (191 aa)) the chain is Extracellular. The span at 62–73 (ELSRLSEDRLAR) shows a compositional bias: basic and acidic residues. The disordered stretch occupies residues 62–106 (ELSRLSEDRLARPEPLNTTSGSPSRRRRREAAEDPAGRVAGPGEV). The 85-residue stretch at 66 to 150 (LSEDRLARPE…DVARELGKNL (85 aa)) folds into the Death domain. N-linked (GlcNAc...) asparagine glycosylation is present at N78. The chain crosses the membrane as a helical span at residues 219–239 (LALGLLTGFVGALGTGALVVL). The Cytoplasmic portion of the chain corresponds to 240–317 (LTLWITGGDG…SWGSGALDGL (78 aa)).

It is found in the membrane. This Homo sapiens (Human) protein is Transmembrane and death domain protein 1.